Here is a 120-residue protein sequence, read N- to C-terminus: NAD(P)H-quinone oxidoreductase subunit 3, chloroplastic (120 aa).

3 helical membrane passes run 9-29, 64-84, and 88-108; these read IFWA…LISG, MFAL…PWAM, and VLGL…IVGS.

Belongs to the complex I subunit 3 family. NDH is composed of at least 16 different subunits, 5 of which are encoded in the nucleus.

Its subcellular location is the plastid. It localises to the chloroplast thylakoid membrane. It carries out the reaction a plastoquinone + NADH + (n+1) H(+)(in) = a plastoquinol + NAD(+) + n H(+)(out). The enzyme catalyses a plastoquinone + NADPH + (n+1) H(+)(in) = a plastoquinol + NADP(+) + n H(+)(out). Its function is as follows. NDH shuttles electrons from NAD(P)H:plastoquinone, via FMN and iron-sulfur (Fe-S) centers, to quinones in the photosynthetic chain and possibly in a chloroplast respiratory chain. The immediate electron acceptor for the enzyme in this species is believed to be plastoquinone. Couples the redox reaction to proton translocation, and thus conserves the redox energy in a proton gradient. This Manihot esculenta (Cassava) protein is NAD(P)H-quinone oxidoreductase subunit 3, chloroplastic.